The primary structure comprises 215 residues: Ribose-5-phosphate isomerase A (215 aa).

Residues 26–29, 79–82, and 92–95 contribute to the substrate site; these read TGST, DGAD, and KGGG. Residue glutamate 101 is the Proton acceptor of the active site. Lysine 119 provides a ligand contact to substrate.

This sequence belongs to the ribose 5-phosphate isomerase family. As to quaternary structure, homodimer.

It carries out the reaction aldehydo-D-ribose 5-phosphate = D-ribulose 5-phosphate. It functions in the pathway carbohydrate degradation; pentose phosphate pathway; D-ribose 5-phosphate from D-ribulose 5-phosphate (non-oxidative stage): step 1/1. Its function is as follows. Catalyzes the reversible conversion of ribose-5-phosphate to ribulose 5-phosphate. This is Ribose-5-phosphate isomerase A from Stenotrophomonas maltophilia (strain R551-3).